The chain runs to 275 residues: NH(3)-dependent NAD(+) synthetase (275 aa).

Position 50–57 (Gly-50–Ser-57) interacts with ATP. Asp-56 provides a ligand contact to Mg(2+). Arg-147 contributes to the deamido-NAD(+) binding site. Thr-167 serves as a coordination point for ATP. Glu-172 contributes to the Mg(2+) binding site. Deamido-NAD(+)-binding residues include Lys-180 and Asp-187. 2 residues coordinate ATP: Lys-196 and Thr-218. His-267–Lys-268 is a binding site for deamido-NAD(+).

It belongs to the NAD synthetase family. As to quaternary structure, homodimer.

It catalyses the reaction deamido-NAD(+) + NH4(+) + ATP = AMP + diphosphate + NAD(+) + H(+). The protein operates within cofactor biosynthesis; NAD(+) biosynthesis; NAD(+) from deamido-NAD(+) (ammonia route): step 1/1. In terms of biological role, catalyzes the ATP-dependent amidation of deamido-NAD to form NAD. Uses ammonia as a nitrogen source. The sequence is that of NH(3)-dependent NAD(+) synthetase from Ectopseudomonas mendocina (strain ymp) (Pseudomonas mendocina).